A 395-amino-acid polypeptide reads, in one-letter code: Elongation factor Tu (395 aa).

Residues 10–204 (KPHVNIGTIG…TVDSYIPEPA (195 aa)) form the tr-type G domain. A G1 region spans residues 19–26 (GHVDHGKT). A GTP-binding site is contributed by 19 to 26 (GHVDHGKT). Thr26 contacts Mg(2+). The segment at 60–64 (GITIN) is G2. The G3 stretch occupies residues 81–84 (DAPG). Residues 81-85 (DAPGH) and 136-139 (NKTD) contribute to the GTP site. The interval 136–139 (NKTD) is G4. The interval 174 to 176 (SAL) is G5.

The protein belongs to the TRAFAC class translation factor GTPase superfamily. Classic translation factor GTPase family. EF-Tu/EF-1A subfamily. Monomer.

It localises to the cytoplasm. The enzyme catalyses GTP + H2O = GDP + phosphate + H(+). In terms of biological role, GTP hydrolase that promotes the GTP-dependent binding of aminoacyl-tRNA to the A-site of ribosomes during protein biosynthesis. The sequence is that of Elongation factor Tu from Leuconostoc mesenteroides subsp. mesenteroides (strain ATCC 8293 / DSM 20343 / BCRC 11652 / CCM 1803 / JCM 6124 / NCDO 523 / NBRC 100496 / NCIMB 8023 / NCTC 12954 / NRRL B-1118 / 37Y).